The sequence spans 470 residues: L-fuculokinase (470 aa).

The protein belongs to the FGGY kinase family. It depends on a divalent metal cation as a cofactor.

The enzyme catalyses L-fuculose + ATP = L-fuculose 1-phosphate + ADP + H(+). It functions in the pathway carbohydrate degradation; L-fucose degradation; L-lactaldehyde and glycerone phosphate from L-fucose: step 2/3. In terms of biological role, catalyzes the phosphorylation of L-fuculose. The chain is L-fuculokinase from Haemophilus influenzae (strain ATCC 51907 / DSM 11121 / KW20 / Rd).